The chain runs to 272 residues: Probable feruloyl esterase C (272 aa).

A signal peptide spans 1–22 (MVPTMIYSAILALSAFTPSVLA).

Belongs to the faeC family.

It is found in the secreted. It carries out the reaction feruloyl-polysaccharide + H2O = ferulate + polysaccharide.. Functionally, involved in degradation of plant cell walls. Hydrolyzes the feruloyl-arabinose ester bond in arabinoxylans, and the feruloyl-galactose ester bond in pectin. Active against paranitrophenyl-acetate, methyl ferulate and wheat arabinoxylan. This is Probable feruloyl esterase C (faeC) from Neosartorya fischeri (strain ATCC 1020 / DSM 3700 / CBS 544.65 / FGSC A1164 / JCM 1740 / NRRL 181 / WB 181) (Aspergillus fischerianus).